Here is a 557-residue protein sequence, read N- to C-terminus: Potassium-transporting ATPase potassium-binding subunit (557 aa).

A run of 10 helical transmembrane segments spans residues 6–26 (IQLLIFLFALLIFSPLFGLGL), 59–79 (ALSLLVFNFFGFLLLFLILFF), 127–147 (AGLTTQNFLSATTGLCVLLAL), 172–192 (LYVLLPLSFIFALFLVGFGVV), 247–267 (ISNFLQMFSILILPGACVFLY), 278–298 (WAIFSVMFTILCVGILIVWTF), 363–383 (IVFGGVGAGMYGMILFVLLTV), 410–430 (ILGILLPSTIILLFTAISVSV), 475–495 (VMIAIAMILGRFGVILPVLVI), and 520–540 (FYILLLSVIIIVGALTFFPVL).

It belongs to the KdpA family. The system is composed of three essential subunits: KdpA, KdpB and KdpC.

It localises to the cell inner membrane. Part of the high-affinity ATP-driven potassium transport (or Kdp) system, which catalyzes the hydrolysis of ATP coupled with the electrogenic transport of potassium into the cytoplasm. This subunit binds the periplasmic potassium ions and delivers the ions to the membrane domain of KdpB through an intramembrane tunnel. The polypeptide is Potassium-transporting ATPase potassium-binding subunit (Leptospira interrogans serogroup Icterohaemorrhagiae serovar copenhageni (strain Fiocruz L1-130)).